The sequence spans 480 residues: Alpha-glucosidase (480 aa).

4-70 is an NAD(+) binding site; sequence VKIGIIGAGS…ADLKFEKTTS (67 aa). Substrate is bound by residues aspartate 119 and asparagine 153. Cysteine 174 lines the Mn(2+) pocket. The active-site Proton donor is histidine 175. Histidine 203 serves as a coordination point for Mn(2+). Residue aspartate 260 is the Proton acceptor of the active site.

This sequence belongs to the glycosyl hydrolase 4 family. In terms of assembly, homodimer. NAD(+) is required as a cofactor. The cofactor is Mn(2+).

It catalyses the reaction Hydrolysis of terminal, non-reducing (1-&gt;4)-linked alpha-D-glucose residues with release of alpha-D-glucose.. Its activity is regulated as follows. Inhibited by EDTA in vitro. Is able to hydrolyze diverse types of alpha-glycoside bonds in di- and trisaccharides: alpha-1,4 bonds of maltose and maltotriose, alpha-1,1 bonds of trehalose, alpha-1,2 bonds of sucrose, alpha-1,3 bonds of turanose and melizitose, alpha-1,6 bonds of isomaltose and melibiose. AglA is not specific with respect to the configuration at the C-4 position of its substrates because it also possesses alpha-galactosidase activity. Acts on the substrate from the non-reducing end of the chain. The activity of AglA drops with increasing length of the saccharide chain. Does not hydrolyze alpha-, beta-, and gamma-cyclodextrins or polysaccharides (starch, pullulan, amylose, amylopectin, glycogen). Does not cleave beta-glycosidic bonds in di-, oligo-, or polysaccharides. The chain is Alpha-glucosidase (aglA) from Thermotoga neapolitana.